The primary structure comprises 831 residues: Phenylalanine--tRNA ligase beta subunit (831 aa).

One can recognise a tRNA-binding domain in the interval 44 to 155 (GPVDGPVTVG…GAAEPGADGA (112 aa)). A B5 domain is found at 414 to 489 (WSPPPIRMGV…RLEGLEVIPS (76 aa)). Residues Asp467, Asp473, Glu476, and Glu477 each coordinate Mg(2+). One can recognise an FDX-ACB domain in the interval 737-830 (SPYPAVFQDV…AAERVGAVLR (94 aa)).

It belongs to the phenylalanyl-tRNA synthetase beta subunit family. Type 1 subfamily. Tetramer of two alpha and two beta subunits. It depends on Mg(2+) as a cofactor.

It is found in the cytoplasm. It catalyses the reaction tRNA(Phe) + L-phenylalanine + ATP = L-phenylalanyl-tRNA(Phe) + AMP + diphosphate + H(+). In Mycobacterium tuberculosis (strain ATCC 25618 / H37Rv), this protein is Phenylalanine--tRNA ligase beta subunit (pheT).